Here is a 197-residue protein sequence, read N- to C-terminus: Small ribosomal subunit protein uS5 (197 aa).

The interval 1 to 27 is disordered; that stretch reads MAEREQRGGRDQRGGGRERKEREERDS. Residues 29–92 enclose the S5 DRBM domain; the sequence is FVDKLVHINR…ESAKRNLTRV (64 aa).

The protein belongs to the universal ribosomal protein uS5 family. As to quaternary structure, part of the 30S ribosomal subunit. Contacts proteins S4 and S8.

With S4 and S12 plays an important role in translational accuracy. Functionally, located at the back of the 30S subunit body where it stabilizes the conformation of the head with respect to the body. This Bradyrhizobium diazoefficiens (strain JCM 10833 / BCRC 13528 / IAM 13628 / NBRC 14792 / USDA 110) protein is Small ribosomal subunit protein uS5.